The primary structure comprises 437 residues: Leucine-rich repeat flightless-interacting protein 2 (437 aa).

The residue at position 18 (Ser-18) is a Phosphoserine. Positions 22–49 (EALSNIAREAEARLAAKRAARAEARDIR) form a coiled coil. Positions 33-62 (ARLAAKRAARAEARDIRMRELERQQRESSS) are enriched in basic and acidic residues. Residues 33 to 152 (ARLAAKRAAR…DTSLSELRES (120 aa)) form a disordered region. A compositionally biased stretch (polar residues) spans 63–74 (KDITGTHWSRAS). Positions 77–105 (KRRDMMYDSIKDRSSRVSSLLDEKSDKQY) are enriched in basic and acidic residues. The span at 110 to 139 (TRPSSRNSASATTPLSGNSSRRGSGDTSSL) shows a compositional bias: polar residues. 5 positions are modified to phosphoserine: Ser-114, Ser-117, Ser-125, Ser-129, and Ser-133. The residue at position 136 (Thr-136) is a Phosphothreonine. Phosphoserine occurs at positions 137 and 138. Coiled coils occupy residues 143–239 (DTSL…LIEK) and 282–430 (LDVR…KANR).

Belongs to the LRRFIP family. As to quaternary structure, interacts with DVL3 and FLII. Weakly interacts with MYD88 in resting cells. Following LPS-stimulation, the interaction with MYD88 is rapidly enhanced; the complex gradually dissociates to basal levels after 6 hours of stimulation. Interaction with MYD88 is regulated by LPS-induced phosphorylation. In the presence of LPS, competes with FLII for MYD88-binding.

May function as activator of the canonical Wnt signaling pathway, in association with DVL3, upstream of CTNNB1/beta-catenin. Positively regulates Toll-like receptor (TLR) signaling in response to agonist probably by competing with the negative FLII regulator for MYD88-binding. The polypeptide is Leucine-rich repeat flightless-interacting protein 2 (Lrrfip2) (Rattus norvegicus (Rat)).